The sequence spans 535 residues: Light-independent protochlorophyllide reductase subunit B (535 aa).

Asp36 is a binding site for [4Fe-4S] cluster. Asp292 serves as the catalytic Proton donor. 428 to 429 (GL) contributes to the substrate binding site.

This sequence belongs to the ChlB/BchB/BchZ family. As to quaternary structure, protochlorophyllide reductase is composed of three subunits; BchL, BchN and BchB. Forms a heterotetramer of two BchB and two BchN subunits. The cofactor is [4Fe-4S] cluster.

The enzyme catalyses chlorophyllide a + oxidized 2[4Fe-4S]-[ferredoxin] + 2 ADP + 2 phosphate = protochlorophyllide a + reduced 2[4Fe-4S]-[ferredoxin] + 2 ATP + 2 H2O. It functions in the pathway porphyrin-containing compound metabolism; bacteriochlorophyll biosynthesis (light-independent). Functionally, component of the dark-operative protochlorophyllide reductase (DPOR) that uses Mg-ATP and reduced ferredoxin to reduce ring D of protochlorophyllide (Pchlide) to form chlorophyllide a (Chlide). This reaction is light-independent. The NB-protein (BchN-BchB) is the catalytic component of the complex. The sequence is that of Light-independent protochlorophyllide reductase subunit B from Pelodictyon phaeoclathratiforme (strain DSM 5477 / BU-1).